The primary structure comprises 1120 residues: Prophage side tail fiber protein homolog StfR (1120 aa).

3 disordered regions span residues 129–154 (KSAS…SARA), 221–442 (SAST…ATRA), and 960–1021 (SGRA…AGAH). Composition is skewed to low complexity over residues 221–239 (SAST…ARDA), 248–395 (SSET…SASA), and 402–442 (RQAS…ATRA). Residues 985-1021 (DLGTKTTSSFDYGTKSTNNTGAHTHSVSGSTNSAGAH) show a composition bias toward polar residues.

This sequence belongs to the tail fiber family.

This is Prophage side tail fiber protein homolog StfR (stfR) from Escherichia coli (strain K12).